Reading from the N-terminus, the 458-residue chain is Cell division protein FtsZ (458 aa).

Residues 22–26, 109–111, E140, R144, and D188 each bind GTP; these read GAGGN and GTG. Residues 319–458 form a disordered region; the sequence is KAEEEASKQP…IPFFKHRRQD (140 aa). The span at 368–379 shows a compositional bias: polar residues; the sequence is NTISHEAPTQSI. Residues 401-418 show a composition bias toward basic and acidic residues; the sequence is KQDRKENNRPQPVENKEK. Over residues 425–439 the composition is skewed to low complexity; that stretch reads SFSSDDSTSISQIET.

It belongs to the FtsZ family. As to quaternary structure, homodimer. Polymerizes to form a dynamic ring structure in a strictly GTP-dependent manner. Interacts directly with several other division proteins.

It is found in the cytoplasm. Essential cell division protein that forms a contractile ring structure (Z ring) at the future cell division site. The regulation of the ring assembly controls the timing and the location of cell division. One of the functions of the FtsZ ring is to recruit other cell division proteins to the septum to produce a new cell wall between the dividing cells. Binds GTP and shows GTPase activity. The chain is Cell division protein FtsZ from Lactobacillus johnsonii (strain CNCM I-12250 / La1 / NCC 533).